A 319-amino-acid chain; its full sequence is 4-hydroxy-3-methylbut-2-enyl diphosphate reductase (319 aa).

Cysteine 17 contacts [4Fe-4S] cluster. (2E)-4-hydroxy-3-methylbut-2-enyl diphosphate contacts are provided by histidine 46 and histidine 79. The dimethylallyl diphosphate site is built by histidine 46 and histidine 79. Isopentenyl diphosphate contacts are provided by histidine 46 and histidine 79. Residue cysteine 101 participates in [4Fe-4S] cluster binding. Histidine 129 is a binding site for (2E)-4-hydroxy-3-methylbut-2-enyl diphosphate. Histidine 129 contributes to the dimethylallyl diphosphate binding site. Histidine 129 provides a ligand contact to isopentenyl diphosphate. Glutamate 131 acts as the Proton donor in catalysis. Threonine 170 contributes to the (2E)-4-hydroxy-3-methylbut-2-enyl diphosphate binding site. [4Fe-4S] cluster is bound at residue cysteine 200. (2E)-4-hydroxy-3-methylbut-2-enyl diphosphate-binding residues include serine 228, serine 229, asparagine 230, and serine 273. Serine 228, serine 229, asparagine 230, and serine 273 together coordinate dimethylallyl diphosphate. Residues serine 228, serine 229, asparagine 230, and serine 273 each contribute to the isopentenyl diphosphate site.

The protein belongs to the IspH family. It depends on [4Fe-4S] cluster as a cofactor.

It catalyses the reaction isopentenyl diphosphate + 2 oxidized [2Fe-2S]-[ferredoxin] + H2O = (2E)-4-hydroxy-3-methylbut-2-enyl diphosphate + 2 reduced [2Fe-2S]-[ferredoxin] + 2 H(+). The catalysed reaction is dimethylallyl diphosphate + 2 oxidized [2Fe-2S]-[ferredoxin] + H2O = (2E)-4-hydroxy-3-methylbut-2-enyl diphosphate + 2 reduced [2Fe-2S]-[ferredoxin] + 2 H(+). It participates in isoprenoid biosynthesis; dimethylallyl diphosphate biosynthesis; dimethylallyl diphosphate from (2E)-4-hydroxy-3-methylbutenyl diphosphate: step 1/1. The protein operates within isoprenoid biosynthesis; isopentenyl diphosphate biosynthesis via DXP pathway; isopentenyl diphosphate from 1-deoxy-D-xylulose 5-phosphate: step 6/6. Its function is as follows. Catalyzes the conversion of 1-hydroxy-2-methyl-2-(E)-butenyl 4-diphosphate (HMBPP) into a mixture of isopentenyl diphosphate (IPP) and dimethylallyl diphosphate (DMAPP). Acts in the terminal step of the DOXP/MEP pathway for isoprenoid precursor biosynthesis. The chain is 4-hydroxy-3-methylbut-2-enyl diphosphate reductase from Cereibacter sphaeroides (strain ATCC 17023 / DSM 158 / JCM 6121 / CCUG 31486 / LMG 2827 / NBRC 12203 / NCIMB 8253 / ATH 2.4.1.) (Rhodobacter sphaeroides).